The sequence spans 937 residues: Protein SEY1 homolog (937 aa).

Residues 1 to 848 lie on the Cytoplasmic side of the membrane; the sequence is MEKGVEKTQI…ETGSKMSLKN (848 aa). The 247-residue stretch at 34 to 280 folds into the GB1/RHD3-type G domain; the sequence is GFSYNVIAVL…IPSDGFAQYC (247 aa). Residue 44–51 coordinates GTP; it reads GSQSSGKS. Coiled coils occupy residues 319–339 and 725–750; these read NKEI…NFKE and YLDE…IIIQ. Residues 849–869 traverse the membrane as a helical segment; the sequence is VPVVFWIILLLFGWNEILFFI. Topologically, residues 870–872 are lumenal; sequence RMF. Residues 873–893 traverse the membrane as a helical segment; the sequence is FKLNVILPLFFAAAFIVSTFV. Residues 894-937 are Cytoplasmic-facing; sequence YNGNTQALSYINKIIFYMAKNSYNFFKHIQAISNPPPKNVQKQE.

It belongs to the TRAFAC class dynamin-like GTPase superfamily. GB1/RHD3 GTPase family. RHD3 subfamily.

The protein localises to the endoplasmic reticulum membrane. In terms of biological role, probable GTP-binding protein involved in generating and maintaining the structure of the tubular endoplasmic reticulum network. The polypeptide is Protein SEY1 homolog (Plasmodium falciparum (isolate 3D7)).